Consider the following 126-residue polypeptide: Large ribosomal subunit protein bL12 (126 aa).

The segment at 97–126 (PQPVKSGVSKEEAEEAKKQLAESGAEVEVK) is disordered. Basic and acidic residues predominate over residues 104 to 116 (VSKEEAEEAKKQL).

The protein belongs to the bacterial ribosomal protein bL12 family. In terms of assembly, homodimer. Part of the ribosomal stalk of the 50S ribosomal subunit. Forms a multimeric L10(L12)X complex, where L10 forms an elongated spine to which 2 to 4 L12 dimers bind in a sequential fashion. Binds GTP-bound translation factors.

In terms of biological role, forms part of the ribosomal stalk which helps the ribosome interact with GTP-bound translation factors. Is thus essential for accurate translation. In Geotalea uraniireducens (strain Rf4) (Geobacter uraniireducens), this protein is Large ribosomal subunit protein bL12.